An 84-amino-acid polypeptide reads, in one-letter code: Large ribosomal subunit protein bL27 (84 aa).

The protein belongs to the bacterial ribosomal protein bL27 family.

The sequence is that of Large ribosomal subunit protein bL27 from Karelsulcia muelleri (strain GWSS) (Sulcia muelleri).